The following is a 420-amino-acid chain: Sodium-dependent phosphate transport protein 4 (420 aa).

The segment at Met-1–Gln-21 is disordered. 4 N-linked (GlcNAc...) asparagine glycosylation sites follow: Asn-49, Asn-60, Asn-68, and Asn-77. 8 consecutive transmembrane segments (helical) span residues Ser-126–Ile-146, Phe-154–Ile-174, Ile-218–Tyr-238, Leu-256–Ala-276, Ile-292–Gly-314, Thr-319–Leu-341, Gly-357–Asp-377, and Val-385–Glu-405.

It belongs to the major facilitator superfamily. Sodium/anion cotransporter family. Expressed in the liver and kidney. It is detected in proximal tubules in renal cortex as well as some tubules and glomeruli, with highest expression at the apical side of proximal tubules (at protein level).

The protein localises to the endoplasmic reticulum membrane. The protein resides in the cell membrane. The catalysed reaction is urate(in) + Na(+)(out) = urate(out) + Na(+)(in). In terms of biological role, transports organic anions in a voltage-driven, multispecific, manner, on the apical side of renal proximal tubule. In particular, participates in the secretion of urate from the cell into the lumen. Urate is the end product of purine metabolism. May have roles in the metabolism and secretion of estrone sulfate, estradiol-17-beta-glucuronide, ochratoxin A, as wells as drugs such as bumetanide. The polypeptide is Sodium-dependent phosphate transport protein 4 (SLC17A3) (Homo sapiens (Human)).